A 523-amino-acid polypeptide reads, in one-letter code: Sensory neuron membrane protein 1 (523 aa).

The Cytoplasmic segment spans residues 1–10; that stretch reads MRLARGIKYA. The chain crosses the membrane as a helical span at residues 11-31; sequence VIGAGVALFGVLFGWVMFPAI. The Extracellular segment spans residues 32-458; sequence LKSQLKKEMA…NQLFIPKRIV (427 aa). Asparagine 67 and asparagine 229 each carry an N-linked (GlcNAc...) asparagine glycan. Intrachain disulfides connect cysteine 268–cysteine 333, cysteine 297–cysteine 352, and cysteine 335–cysteine 341. A glycan (N-linked (GlcNAc...) asparagine) is linked at asparagine 440. Residues 459–479 form a helical membrane-spanning segment; the sequence is SVIRWWLLSFGMLAALGGVIF. Residues 480–523 are Cytoplasmic-facing; sequence HFKDDIMRIAIKGDSSVTKVNPEDGEQKDVSVIGQSHEPPKINM. The tract at residues 499 to 523 is disordered; it reads VNPEDGEQKDVSVIGQSHEPPKINM.

The protein belongs to the CD36 family. Localizes to both male and female antennae but not the leg, wing, gut, head, or thoracic ganglia. Detected throughout the sensory epithelium, associating with both sex-pheromone sensilla and plant-volatile sensilla. Differentially expressed both among different sensilla and different neurons within a given sensillum. Expression coincides with that of several other olfactory-specific proteins that are involved in odor detection.

Its subcellular location is the cell membrane. Plays an olfactory role that is not restricted to pheromone sensitivity. This chain is Sensory neuron membrane protein 1, found in Manduca sexta (Tobacco hawkmoth).